The primary structure comprises 818 residues: Probable beta-glucosidase I (818 aa).

Residue N176 is glycosylated (N-linked (GlcNAc...) asparagine). Residue D204 is part of the active site. Residues 374 to 534 (DGKPGFTFRV…SQEELISNAV (161 aa)) form the PA14 domain. Residues N453 and N472 are each glycosylated (N-linked (GlcNAc...) asparagine).

The protein belongs to the glycosyl hydrolase 3 family.

Its subcellular location is the secreted. The catalysed reaction is Hydrolysis of terminal, non-reducing beta-D-glucosyl residues with release of beta-D-glucose.. It participates in glycan metabolism; cellulose degradation. In terms of biological role, beta-glucosidases are one of a number of cellulolytic enzymes involved in the degradation of cellulosic biomass. Catalyzes the last step releasing glucose from the inhibitory cellobiose. This Aspergillus niger (strain ATCC MYA-4892 / CBS 513.88 / FGSC A1513) protein is Probable beta-glucosidase I (bglI).